The primary structure comprises 319 residues: tRNA U34 carboxymethyltransferase (319 aa).

Residues K88, W102, K107, G126, 176–177 (LE), M192, Y196, and R311 contribute to the carboxy-S-adenosyl-L-methionine site.

Belongs to the class I-like SAM-binding methyltransferase superfamily. CmoB family. As to quaternary structure, homotetramer.

The catalysed reaction is carboxy-S-adenosyl-L-methionine + 5-hydroxyuridine(34) in tRNA = 5-carboxymethoxyuridine(34) in tRNA + S-adenosyl-L-homocysteine + H(+). Catalyzes carboxymethyl transfer from carboxy-S-adenosyl-L-methionine (Cx-SAM) to 5-hydroxyuridine (ho5U) to form 5-carboxymethoxyuridine (cmo5U) at position 34 in tRNAs. The protein is tRNA U34 carboxymethyltransferase of Pseudomonas syringae pv. tomato (strain ATCC BAA-871 / DC3000).